The sequence spans 266 residues: Vesicle-associated protein 4-1 (266 aa).

The segment at 28-57 is disordered; sequence STTSSSSTQNPNQNYRSRHGNRNTDISAVS. The MSP domain maps to 76–199; the sequence is RLRLDPSSYL…VEQVLRVIFI (124 aa). Residues 200-228 are a coiled coil; that stretch reads DADRPSAALEKLKRQLDEAEAAVEARKKP. The span at 219–229 shows a compositional bias: basic and acidic residues; the sequence is EAAVEARKKPP. The segment at 219-239 is disordered; sequence EAAVEARKKPPPETGPRVVGE. Residue S264 is modified to Phosphoserine.

This sequence belongs to the VAMP-associated protein (VAP) (TC 9.B.17) family.

Functionally, may play a role in vesicle trafficking. This Arabidopsis thaliana (Mouse-ear cress) protein is Vesicle-associated protein 4-1 (PVA41).